The following is a 91-amino-acid chain: UPF0250 protein NGO_0791 (91 aa).

Belongs to the UPF0250 family.

The sequence is that of UPF0250 protein NGO_0791 from Neisseria gonorrhoeae (strain ATCC 700825 / FA 1090).